A 669-amino-acid chain; its full sequence is DNA ligase (669 aa).

NAD(+) contacts are provided by residues 35–39 (DSEYD), 84–85 (SL), and Glu-114. The active-site N6-AMP-lysine intermediate is the Lys-116. 4 residues coordinate NAD(+): Arg-137, Glu-171, Lys-287, and Lys-311. Residues Cys-405, Cys-408, Cys-423, and Cys-428 each coordinate Zn(2+). Residues 591–669 (DSDSYFAGKT…EAQLLGELKK (79 aa)) form the BRCT domain.

Belongs to the NAD-dependent DNA ligase family. LigA subfamily. Mg(2+) serves as cofactor. The cofactor is Mn(2+).

The catalysed reaction is NAD(+) + (deoxyribonucleotide)n-3'-hydroxyl + 5'-phospho-(deoxyribonucleotide)m = (deoxyribonucleotide)n+m + AMP + beta-nicotinamide D-nucleotide.. Its function is as follows. DNA ligase that catalyzes the formation of phosphodiester linkages between 5'-phosphoryl and 3'-hydroxyl groups in double-stranded DNA using NAD as a coenzyme and as the energy source for the reaction. It is essential for DNA replication and repair of damaged DNA. This Bacillus velezensis (strain DSM 23117 / BGSC 10A6 / LMG 26770 / FZB42) (Bacillus amyloliquefaciens subsp. plantarum) protein is DNA ligase.